The primary structure comprises 515 residues: Maturase K (515 aa).

This sequence belongs to the intron maturase 2 family. MatK subfamily.

The protein resides in the plastid. Its subcellular location is the chloroplast. Its function is as follows. Usually encoded in the trnK tRNA gene intron. Probably assists in splicing its own and other chloroplast group II introns. This is Maturase K from Pinus patula (Mexican weeping pine).